The primary structure comprises 469 residues: Adenosylhomocysteinase (469 aa).

Substrate is bound by residues Thr63, Asp139, and Glu164. 165–167 is a binding site for NAD(+); sequence TTT. Lys194 and Asp198 together coordinate substrate. Residues Asn199, 228 to 233, Glu251, Asn300, 321 to 323, and Asn375 each bind NAD(+); these read GYGDVG and IGH.

It belongs to the adenosylhomocysteinase family. It depends on NAD(+) as a cofactor.

It localises to the cytoplasm. It carries out the reaction S-adenosyl-L-homocysteine + H2O = L-homocysteine + adenosine. The protein operates within amino-acid biosynthesis; L-homocysteine biosynthesis; L-homocysteine from S-adenosyl-L-homocysteine: step 1/1. Functionally, may play a key role in the regulation of the intracellular concentration of adenosylhomocysteine. The polypeptide is Adenosylhomocysteinase (Ectopseudomonas mendocina (strain ymp) (Pseudomonas mendocina)).